Here is a 197-residue protein sequence, read N- to C-terminus: Probable GTP-binding protein EngB (197 aa).

Residues 22-195 (ELPEVALAGR…WKAIYALITE (174 aa)) form the EngB-type G domain. GTP is bound by residues 30–37 (GRSNVGKS), 57–61 (GKTQT), 75–78 (DVPG), 142–145 (TKLD), and 174–176 (FSA). 2 residues coordinate Mg(2+): serine 37 and threonine 59.

Belongs to the TRAFAC class TrmE-Era-EngA-EngB-Septin-like GTPase superfamily. EngB GTPase family. Requires Mg(2+) as cofactor.

Necessary for normal cell division and for the maintenance of normal septation. The chain is Probable GTP-binding protein EngB from Exiguobacterium sp. (strain ATCC BAA-1283 / AT1b).